Here is a 287-residue protein sequence, read N- to C-terminus: Undecaprenyl-diphosphatase (287 aa).

The next 7 membrane-spanning stretches (helical) occupy residues 6–26 (LHLL…FIPV), 45–65 (SGKV…MWIF), 89–109 (NLLL…KSIK), 111–131 (VFYH…IMLW), 204–224 (ATEF…VYDL), 238–258 (AIAV…RAVL), and 266–286 (YRVF…WIYA).

The protein belongs to the UppP family.

The protein localises to the cell inner membrane. It catalyses the reaction di-trans,octa-cis-undecaprenyl diphosphate + H2O = di-trans,octa-cis-undecaprenyl phosphate + phosphate + H(+). Catalyzes the dephosphorylation of undecaprenyl diphosphate (UPP). Confers resistance to bacitracin. The chain is Undecaprenyl-diphosphatase from Bordetella pertussis (strain Tohama I / ATCC BAA-589 / NCTC 13251).